The primary structure comprises 249 residues: Phosphoserine phosphatase (249 aa).

Belongs to the HAD-like hydrolase superfamily. Homodimer. Requires Mg(2+) as cofactor. The cofactor is Co(2+).

It carries out the reaction O-phospho-L-serine + H2O = L-serine + phosphate. The enzyme catalyses O-phospho-D-serine + H2O = D-serine + phosphate. Its pathway is amino-acid biosynthesis; L-serine biosynthesis; L-serine from 3-phospho-D-glycerate: step 3/3. Its function is as follows. Catalyzes the last step of the phosphorylated serine biosynthetic pathway, i.e. dephosphorylation of O-phospho-L-serine to form L-serine. Is also able to dephosphorylate O-phospho-D-serine with similar efficiency. Displays a poor activity on L-phosphothreonine, and cannot use L-phosphotyrosine, pyridoxal phosphate, glucose 6-phosphate, or fructose 6-phosphate as substrates. The polypeptide is Phosphoserine phosphatase (Thermus thermophilus (strain ATCC BAA-163 / DSM 7039 / HB27)).